The chain runs to 257 residues: RNA polymerase sigma-G factor (257 aa).

Positions Asp-66–Ile-79 match the Polymerase core binding motif. Residues Gln-228–Lys-247 constitute a DNA-binding region (H-T-H motif).

The protein belongs to the sigma-70 factor family.

Functionally, sigma factors are initiation factors that promote the attachment of RNA polymerase to specific initiation sites and are then released. This sigma factor is responsible for the expression of sporulation specific genes. The chain is RNA polymerase sigma-G factor (sigG) from Clostridium acetobutylicum (strain ATCC 824 / DSM 792 / JCM 1419 / IAM 19013 / LMG 5710 / NBRC 13948 / NRRL B-527 / VKM B-1787 / 2291 / W).